Here is a 180-residue protein sequence, read N- to C-terminus: Hypoxanthine-guanine phosphoribosyltransferase (180 aa).

2 residues coordinate diphosphate: K43 and G44. Mg(2+) contacts are provided by E99 and D100. Residue D103 is the Proton acceptor of the active site. GMP-binding positions include K131, 152 to 153, and D159; that span reads FV. Position 165 (R165) interacts with diphosphate.

This sequence belongs to the purine/pyrimidine phosphoribosyltransferase family. Mg(2+) serves as cofactor.

It localises to the cytoplasm. The catalysed reaction is IMP + diphosphate = hypoxanthine + 5-phospho-alpha-D-ribose 1-diphosphate. The enzyme catalyses GMP + diphosphate = guanine + 5-phospho-alpha-D-ribose 1-diphosphate. The protein operates within purine metabolism; IMP biosynthesis via salvage pathway; IMP from hypoxanthine: step 1/1. It functions in the pathway purine metabolism; GMP biosynthesis via salvage pathway; GMP from guanine: step 1/1. Its function is as follows. Purine salvage pathway enzyme that catalyzes the transfer of the ribosyl-5-phosphate group from 5-phospho-alpha-D-ribose 1-diphosphate (PRPP) to the N9 position of the 6-oxopurines hypoxanthine and guanine to form the corresponding ribonucleotides IMP (inosine 5'-monophosphate) and GMP (guanosine 5'-monophosphate), with the release of PPi. The protein is Hypoxanthine-guanine phosphoribosyltransferase (hprT) of Bacillus subtilis (strain 168).